Here is a 60-residue protein sequence, read N- to C-terminus: Large ribosomal subunit protein bL32 (60 aa).

A disordered region spans residues 1–60; the sequence is MAVQQNKKSPSKRGMHRSHDALTNPPLAIEPTTGETHLRHHISPNGFYRGKKVIKTKNDD. A compositionally biased stretch (basic residues) spans 49–60; sequence RGKKVIKTKNDD.

This sequence belongs to the bacterial ribosomal protein bL32 family.

In Nitrosomonas eutropha (strain DSM 101675 / C91 / Nm57), this protein is Large ribosomal subunit protein bL32.